A 127-amino-acid chain; its full sequence is Protein ApaG (127 aa).

Positions 3–127 constitute an ApaG domain; it reads KTSIPDFQIT…FYLIAPLALH (125 aa).

The polypeptide is Protein ApaG (Bdellovibrio bacteriovorus (strain ATCC 15356 / DSM 50701 / NCIMB 9529 / HD100)).